The sequence spans 407 residues: M protein, serotype 2.1 (407 aa).

The first 41 residues, 1–41, serve as a signal peptide directing secretion; that stretch reads MARKDTNKQYSLRKLKTGTASVAVAVAVLGAGFANQTTVKA. The tract at residues 81–94 is 2 X 7 AA tandem repeats; it reads VEEEHKKVEEEHKK. Basic and acidic residues-rich tracts occupy residues 83–144, 152–229, 237–264, and 272–288; these read EEHK…KRYQ, QLEK…EKQI, LSRD…EKQI, and LSRD…KVEA. The disordered stretch occupies residues 83–289; it reads EEHKKVEEEH…REAKKKVEAD (207 aa). C repeat units lie at residues 151–185, 186–220, 221–255, and 256–290; these read QQLE…EAEH, QKLK…EAEH, and QKLK…EADL. D repeat units lie at residues 323–328, 329–334, 337–342, and 344–349; these read AKLEAE, AKALKE, AKQAEE, and AKLKGN. Residues 344 to 382 are disordered; it reads AKLKGNQTPNAKVAPQANRSRSAMTQQKRTLPSTGETAN. The span at 360–380 shows a compositional bias: polar residues; that stretch reads ANRSRSAMTQQKRTLPSTGET. Positions 374–378 match the LPXTG sorting signal motif; sequence LPSTG. T377 carries the post-translational modification Pentaglycyl murein peptidoglycan amidated threonine. Residues 378–407 constitute a propeptide, removed by sortase; that stretch reads GETANPFFTAAAATVMVSAGMLALKRKEEN.

It belongs to the M protein family.

It is found in the secreted. The protein localises to the cell wall. Functionally, this protein is one of the different antigenic serotypes of protein M. Protein M is closely associated with virulence of the bacterium and can render the organism resistant to phagocytosis. This is M protein, serotype 2.1 (emmL2.1) from Streptococcus pyogenes.